Reading from the N-terminus, the 1701-residue chain is Merozoite surface protein 1 (1701 aa).

The first 19 residues, 1 to 19, serve as a signal peptide directing secretion; the sequence is MKIIFFLCSFLFFIINTQC. The span at 89–100 shows a compositional bias: gly residues; it reads GSGGSVASGGSG. A disordered region spans residues 89–118; the sequence is GSGGSVASGGSGNSRRTNPSDNSSDSNTKT. Residues 101–116 are compositionally biased toward low complexity; sequence NSRRTNPSDNSSDSNT. 2 N-linked (GlcNAc...) asparagine glycosylation sites follow: N110 and N239. Residues 322–344 are disordered; that stretch reads DAENPTTGSKPNPLPENKKKEVE. Residues N470, N536, and N607 are each glycosylated (N-linked (GlcNAc...) asparagine). The tract at residues 704 to 739 is disordered; it reads SETTEDGGHSTHTLSQSGETEVTEETEVTEETVGHT. Over residues 724–733 the composition is skewed to acidic residues; it reads EVTEETEVTE. 7 N-linked (GlcNAc...) asparagine glycosylation sites follow: N802, N899, N919, N965, N991, N1089, and N1196. Residues 889-927 are compositionally biased toward low complexity; sequence TGTSSTSSPGNTTVNTAQSATHSNSQNQQSNASSTNTQN. The interval 889-936 is disordered; that stretch reads TGTSSTSSPGNTTVNTAQSATHSNSQNQQSNASSTNTQNGVAVSSGPA. Disordered stretches follow at residues 1230–1259 and 1451–1472; these read TPPQ…TQIP and KEKF…DEQK. Over residues 1245–1259 the composition is skewed to polar residues; that stretch reads VSGSSGSTKEETQIP. Over residues 1456-1465 the composition is skewed to pro residues; it reads SSPPTTPPSP. A glycan (N-linked (GlcNAc...) asparagine) is linked at N1588. EGF-like domains lie at 1592–1632 and 1633–1680; these read HQCV…VENP and NPTC…IFCS. Intrachain disulfides connect C1594-C1605, C1599-C1615, C1617-C1628, C1636-C1649, C1643-C1663, and C1665-C1679. S1680 carries the GPI-anchor amidated serine lipid modification. The propeptide at 1681–1701 is removed in mature form; the sequence is SSNFLGISFLLILMLILYSFI.

As to quaternary structure, forms a complex composed of subunits p83, p30, p38, and p42 which remain non-covalently associated; the complex is formed at the merozoite surface prior to egress from host erythrocytes. Forms a complex composed of processed MSP1 subunits, MSP6 subunit p36 and MSP7; the complex is formed at the merozoite surface prior to egress from host erythrocytes. Within the complex, interacts (via subunit p38) with MSP6 subunit p36 and (via subunits p83, p30 and p38) with MSP7 (via subunit p22). Forms a complex composed of MSP1, MSP6, DBLMSP1 and DBLMSP2. Within the complex, interacts (via subunit p38) with DBLMSP1 and DBLMSP2. Forms a complex composed of MSP1, and rhoptry proteins RhopH3, RAP1 and CLAG9/RhopH3. Within the complex, interacts (via subunits p42 and p19) with RhopH3 (via C-terminus). Forms a complex composed of MSP1, MSP6, MSP7, MSP9 and MSP3; within the complex, MSP6 and MSP9 mediate the binding to the host erythrocyte. Interacts (via subunits p19 and p42) with MSP9; the interaction is direct; MSP1 subunits p19 or p42, and MSP9 form a co-ligand complex that interacts with host SLC4A1/Band 3 protein. May interact with PFD6. Interacts with host spectrin. In terms of assembly, interacts with host glycophorin GYPA in a sialic acid-independent manner. Interacts with host proinflammatory cytokine S100P; the interaction blocks S100P inflammatory and chemotactic activities. As to quaternary structure, interacts with host SLC4A1/Band 3 (via 5ABC region) on the host erythrocyte surface in a sialic acid-independent manner. Post-translationally, the p190 precursor is cleaved by SUB1 prior to merozoite egress into 4 subunits p83, p30, p38, and p42 which remain non-covalently associated. SUB1-mediated proteolytic cleavage occurs in an orderly manner; the first cleavage occurs at the p30/p38 site, followed by cleavage at the p83/p30 site, the last cleavage occurs at the p38/p42 site. The order of cleavage is essential for parasite viability. SUB1-mediated processing is essential for merozoite egress. In a second processing step during erythrocyte invasion, p42 is cleaved by SUB2 into p33 and p19; the latter remains attached to the merozoite surface via its GPI-anchor and is endocytosed during the subsequent ring stage.

Its subcellular location is the cell membrane. The protein resides in the secreted. It localises to the vacuole membrane. During the asexual blood stage, involved in merozoite egress from host erythrocytes possibly via its interaction with the host cytoskeleton protein spectrin resulting in the destabilization of the host cytoskeleton and thus leading to erythrocyte cell membrane rupture. Involved in the binding to host erythrocytes and is required for host erythrocyte invasion. In terms of biological role, by binding to host proinflammatory cytokine S100P may interfere with host immune responses. Its function is as follows. Involved in merozoite invasion of host erythrocytes. May play a role in the biogenesis and/or function of the food vacuole during the intraerythrocytic development. The protein is Merozoite surface protein 1 of Plasmodium falciparum (isolate mad20 / Papua New Guinea).